The following is a 517-amino-acid chain: Nectin-1 (517 aa).

A signal peptide spans 1-30; the sequence is MARMGLAGAAGRWWGLALGLTAFFLPGVHS. The Ig-like V-type domain maps to 31–141; that stretch reads QVVQVNDSMY…GNRESQLNLT (111 aa). At 31-355 the chain is on the extracellular side; sequence QVVQVNDSMY…GRRAGPVPTA (325 aa). Residues Asn-36, Asn-72, and Asn-139 are each glycosylated (N-linked (GlcNAc...) asparagine). Residues Cys-51 and Cys-124 are joined by a disulfide bond. Ig-like C2-type domains lie at 149–238 and 247–334; these read WIEG…FKES and PEVT…VNIT. Intrachain disulfides connect Cys-172-Cys-226 and Cys-269-Cys-316. The N-linked (GlcNAc...) (complex) asparagine glycan is linked to Asn-202. Residues 282–299 are interaction with FGFR; it reads WTTLNGSLPKGVEAQNRT. Residues Asn-286, Asn-297, Asn-307, and Asn-332 are each glycosylated (N-linked (GlcNAc...) asparagine). Residues 356-376 form a helical membrane-spanning segment; it reads IIGGVAGSILLVLIVVGGIVV. The Cytoplasmic portion of the chain corresponds to 377 to 517; it reads ALRRRRHTFK…SFISKKEWYV (141 aa). The interval 399–488 is disordered; the sequence is GYSKAGIPQH…DGYGDRTLGY (90 aa). Ser-422, Ser-434, and Ser-435 each carry phosphoserine. Position 436 is a phosphotyrosine (Tyr-436). Residues 436–445 are compositionally biased toward acidic residues; it reads YEEEEEEEEG. The span at 449 to 466 shows a compositional bias: basic and acidic residues; sequence GERKVGGPHPKYDEDAKR. Ser-511 carries the post-translational modification Phosphoserine.

Belongs to the nectin family. Cis- and trans-homodimer. Can form trans-heterodimers with NECTIN3 and with NECTIN4. Interaction between NECTIN1 and NECTIN3 on the pre- and postsynaptic sites, respectively, initiates the formation of puncta adherentia junctions between axons and dendrites. Interacts (via cytoplasmic domain) with AFDN (via PDZ domain); this interaction recruits NECTIN1 to cadherin-based adherens junctions and provides a connection with the actin cytoskeleton. Interacts with integrin alphaV/beta3. Interacts (via Ig-like C2-type domain 2) with FGFR1, FGFR2 and FGFR3. In terms of assembly, (Microbial infection) Interacts with herpes simplex virus 1/HHV-1, herpes simplex virus 2/HHV-2, and pseudorabies virus/PRV envelope glycoprotein D. Post-translationally, (Microbial infection) Ubiquitinated by CBL following infection by herpes simplex virus 1/HHV-1 and association with HHV-1 envelope glycoprotein D, leading to its removal from cell surface.

It is found in the cell membrane. The protein localises to the cell junction. Its subcellular location is the adherens junction. The protein resides in the presynaptic cell membrane. It localises to the secreted. Functionally, cell adhesion molecule that promotes cell-cell contacts and plays important roles in the development of the nervous system. Acts by forming homophilic or heterophilic trans-dimers. Heterophilic interactions have been detected between NECTIN1 and NECTIN3 and between NECTIN1 and NECTIN4. Involved in axon guidance by promoting contacts between the commissural axons and the floor plate cells. Involved in synaptogegesis. Has some neurite outgrowth-promoting activity. Promotes formation of checkerboard-like cellular pattern of hair cells and supporting cells in the auditory epithelium via heterophilic interaction with NECTIN3: NECTIN1 is present in the membrane of hair cells and associates with NECTIN3 on supporting cells, thereby mediating heterotypic adhesion between these two cell types. Required for enamel mineralization. In terms of biological role, (Microbial infection) Acts as a receptor for herpes simplex virus 1/HHV-1, herpes simplex virus 2/HHV-2, and pseudorabies virus/PRV. Constitutes the major receptor for herpes simplex virus 1/HHV-1 entry into host cells. This chain is Nectin-1, found in Homo sapiens (Human).